Reading from the N-terminus, the 164-residue chain is Cytochrome c-type biogenesis protein CcmE (164 aa).

Topologically, residues 1–8 (MNPRRKSR) are cytoplasmic. A helical; Signal-anchor for type II membrane protein transmembrane segment spans residues 9 to 29 (LYLAIVVLIGVALTATLMLYA). At 30–164 (LRSNIDLFYT…ATPQNEGAKS (135 aa)) the chain is on the periplasmic side. Residues His-130 and Tyr-134 each contribute to the heme site. A compositionally biased stretch (basic and acidic residues) spans 131-148 (DEKYTPPEVADAMKENHK). The disordered stretch occupies residues 131–164 (DEKYTPPEVADAMKENHKGPASAYATPQNEGAKS). The segment covering 155 to 164 (ATPQNEGAKS) has biased composition (polar residues).

Belongs to the CcmE/CycJ family.

Its subcellular location is the cell inner membrane. Its function is as follows. Heme chaperone required for the biogenesis of c-type cytochromes. Transiently binds heme delivered by CcmC and transfers the heme to apo-cytochromes in a process facilitated by CcmF and CcmH. The chain is Cytochrome c-type biogenesis protein CcmE from Serratia proteamaculans (strain 568).